The chain runs to 101 residues: Large ribosomal subunit protein bL21 (101 aa).

The protein belongs to the bacterial ribosomal protein bL21 family. As to quaternary structure, part of the 50S ribosomal subunit. Contacts protein L20.

In terms of biological role, this protein binds to 23S rRNA in the presence of protein L20. This chain is Large ribosomal subunit protein bL21, found in Corynebacterium diphtheriae (strain ATCC 700971 / NCTC 13129 / Biotype gravis).